The following is a 415-amino-acid chain: Lipid-A-disaccharide synthase (415 aa).

Residues 1-21 (MNSLPESGSDGQSSADPSQKA) are disordered.

It belongs to the LpxB family.

The enzyme catalyses a lipid X + a UDP-2-N,3-O-bis[(3R)-3-hydroxyacyl]-alpha-D-glucosamine = a lipid A disaccharide + UDP + H(+). The protein operates within bacterial outer membrane biogenesis; LPS lipid A biosynthesis. Its function is as follows. Condensation of UDP-2,3-diacylglucosamine and 2,3-diacylglucosamine-1-phosphate to form lipid A disaccharide, a precursor of lipid A, a phosphorylated glycolipid that anchors the lipopolysaccharide to the outer membrane of the cell. This is Lipid-A-disaccharide synthase from Gluconobacter oxydans (strain 621H) (Gluconobacter suboxydans).